The sequence spans 412 residues: MNNCRQNLENFDPEVFGYLNDEIKRQEEHIELIASENFVSKAVLETMGTELTNKYAEGYPGKRYYGGCEHVDKIEQLAIDRLKKLFNADHANVQPHCGANANIAVYVAVLKPGDTVLGMRLTEGGHLTHGSPVNMSGKFYNFVDYGVDPETGTIDYENVRELALKHKPKLIVAGASAYPRIIDFKKFREIADEVGAYLMVDMAHIAGLVATGDHPSPVPYADFVTTTTHKTLRGPRGGAILCKEEHKKLLDKSVFPGFQGGPLEHIIAAKAVCFKEDLQPEFKEYTHQILKNAKAMEKVFLDNDVRLVSGGTDNHLLLIDCRSFGMTGKEAENVLSEVNITTNKNTIPNDPETPFVTSGIRIGTPAITTRGLKEAEATKVAEFMIDALKKRRPAEEIKNDVVELMKQFPINR.

(6S)-5,6,7,8-tetrahydrofolate-binding positions include Leu121 and Gly125–Leu127. Position 230 is an N6-(pyridoxal phosphate)lysine (Lys230). Position 353-355 (Thr353–Phe355) interacts with (6S)-5,6,7,8-tetrahydrofolate.

It belongs to the SHMT family. Homodimer. The cofactor is pyridoxal 5'-phosphate.

The protein resides in the cytoplasm. The enzyme catalyses (6R)-5,10-methylene-5,6,7,8-tetrahydrofolate + glycine + H2O = (6S)-5,6,7,8-tetrahydrofolate + L-serine. The protein operates within one-carbon metabolism; tetrahydrofolate interconversion. Its pathway is amino-acid biosynthesis; glycine biosynthesis; glycine from L-serine: step 1/1. Functionally, catalyzes the reversible interconversion of serine and glycine with tetrahydrofolate (THF) serving as the one-carbon carrier. This reaction serves as the major source of one-carbon groups required for the biosynthesis of purines, thymidylate, methionine, and other important biomolecules. Also exhibits THF-independent aldolase activity toward beta-hydroxyamino acids, producing glycine and aldehydes, via a retro-aldol mechanism. The chain is Serine hydroxymethyltransferase from Finegoldia magna (strain ATCC 29328 / DSM 20472 / WAL 2508) (Peptostreptococcus magnus).